We begin with the raw amino-acid sequence, 409 residues long: Elongation factor Tu (409 aa).

The 205-residue stretch at 10 to 214 (KPHVNVGTIG…AVDSYIPTPE (205 aa)) folds into the tr-type G domain. The G1 stretch occupies residues 19-26 (GHVDHGKT). Position 19–26 (19–26 (GHVDHGKT)) interacts with GTP. Thr-26 is a Mg(2+) binding site. Residues 60–64 (GITIN) form a G2 region. The interval 81 to 84 (DCPG) is G3. GTP is bound by residues 81–85 (DCPGH) and 136–139 (NKAD). The interval 136 to 139 (NKAD) is G4. The tract at residues 174–176 (SAL) is G5.

It belongs to the TRAFAC class translation factor GTPase superfamily. Classic translation factor GTPase family. EF-Tu/EF-1A subfamily. Monomer.

It is found in the cytoplasm. The enzyme catalyses GTP + H2O = GDP + phosphate + H(+). In terms of biological role, GTP hydrolase that promotes the GTP-dependent binding of aminoacyl-tRNA to the A-site of ribosomes during protein biosynthesis. The protein is Elongation factor Tu of Synechococcus sp. (strain JA-2-3B'a(2-13)) (Cyanobacteria bacterium Yellowstone B-Prime).